We begin with the raw amino-acid sequence, 122 residues long: UPF0145 protein Bmul_3577/BMULJ_04940 (122 aa).

It belongs to the UPF0145 family.

This chain is UPF0145 protein Bmul_3577/BMULJ_04940, found in Burkholderia multivorans (strain ATCC 17616 / 249).